A 409-amino-acid chain; its full sequence is Arginine deiminase (409 aa).

Cysteine 399 functions as the Amidino-cysteine intermediate in the catalytic mechanism.

This sequence belongs to the arginine deiminase family.

Its subcellular location is the cytoplasm. The catalysed reaction is L-arginine + H2O = L-citrulline + NH4(+). The protein operates within amino-acid degradation; L-arginine degradation via ADI pathway; carbamoyl phosphate from L-arginine: step 1/2. The polypeptide is Arginine deiminase (Borreliella afzelii (strain PKo) (Borrelia afzelii)).